A 366-amino-acid chain; its full sequence is uncharacterized protein (366 aa).

This is an uncharacterized protein from Caenorhabditis elegans.